A 142-amino-acid chain; its full sequence is Large ribosomal subunit protein uL11 (142 aa).

This sequence belongs to the universal ribosomal protein uL11 family. In terms of assembly, part of the ribosomal stalk of the 50S ribosomal subunit. Interacts with L10 and the large rRNA to form the base of the stalk. L10 forms an elongated spine to which L12 dimers bind in a sequential fashion forming a multimeric L10(L12)X complex. In terms of processing, one or more lysine residues are methylated.

Functionally, forms part of the ribosomal stalk which helps the ribosome interact with GTP-bound translation factors. The chain is Large ribosomal subunit protein uL11 from Vesicomyosocius okutanii subsp. Calyptogena okutanii (strain HA).